The sequence spans 160 residues: Large ribosomal subunit protein uL22c (160 aa).

This sequence belongs to the universal ribosomal protein uL22 family. Part of the 50S ribosomal subunit.

The protein resides in the plastid. It localises to the chloroplast. This protein binds specifically to 23S rRNA. In terms of biological role, the globular domain of the protein is located near the polypeptide exit tunnel on the outside of the subunit, while an extended beta-hairpin is found that lines the wall of the exit tunnel in the center of the 70S ribosome. This is Large ribosomal subunit protein uL22c (rpl22) from Panax ginseng (Korean ginseng).